The following is a 339-amino-acid chain: MPPEKKRKTEPEDKAEVTQQENDVAESTTEPNNQTVTDSKEEPSVTEAALATTSSSSPPVLSASETAQPDTAATSQSSSTPPTSTSAAESAAAKARERAERFRALQARAKSSSQQNLKKATKESQRLQSDPSQLTALGRRHAIASHKLLKADIEDAGGDFERKRAWDWTVEESERWDKRMKKKEAHRDDTAFRDYNQQAEKSYKRQLRNMGGPDLERYTREKLAAIEKAAAAGTLEIVETEDGEMIAIDKDGTFFSTADSTQFAQHKPDKAAVDRLVADMRKAEEASLKKRRERMANNGDDADVTYINEKNKQFNQKLSRFYNKYTAEIRDSFERGTMV.

The disordered stretch occupies residues 1 to 136 (MPPEKKRKTE…LQSDPSQLTA (136 aa)). Positions 7–16 (RKTEPEDKAE) are enriched in basic and acidic residues. A compositionally biased stretch (polar residues) spans 17-37 (VTQQENDVAESTTEPNNQTVT). Over residues 45 to 93 (VTEAALATTSSSSPPVLSASETAQPDTAATSQSSSTPPTSTSAAESAAA) the composition is skewed to low complexity. A compositionally biased stretch (basic and acidic residues) spans 94-103 (KARERAERFR). Over residues 126–135 (RLQSDPSQLT) the composition is skewed to polar residues.

Belongs to the SYF2 family. In terms of assembly, associated with the spliceosome.

The protein localises to the nucleus. In terms of biological role, involved in pre-mRNA splicing. The sequence is that of Pre-mRNA-splicing factor syf2 (msp-4) from Neurospora crassa (strain ATCC 24698 / 74-OR23-1A / CBS 708.71 / DSM 1257 / FGSC 987).